The chain runs to 442 residues: tRNA modification GTPase MnmE (442 aa).

(6S)-5-formyl-5,6,7,8-tetrahydrofolate is bound by residues arginine 21, glutamate 79, and lysine 118. Residues 214 to 367 (GFKIAIVGKP…LKEELQNYLN (154 aa)) enclose the TrmE-type G domain. K(+) is bound at residue asparagine 224. GTP is bound by residues 224-229 (NVGKSS), 243-249 (SDIAGTT), and 268-271 (DTAG). Serine 228 is a Mg(2+) binding site. K(+) contacts are provided by serine 243, isoleucine 245, and threonine 248. Threonine 249 serves as a coordination point for Mg(2+). Lysine 442 provides a ligand contact to (6S)-5-formyl-5,6,7,8-tetrahydrofolate.

Belongs to the TRAFAC class TrmE-Era-EngA-EngB-Septin-like GTPase superfamily. TrmE GTPase family. Homodimer. Heterotetramer of two MnmE and two MnmG subunits. Requires K(+) as cofactor.

It localises to the cytoplasm. Its function is as follows. Exhibits a very high intrinsic GTPase hydrolysis rate. Involved in the addition of a carboxymethylaminomethyl (cmnm) group at the wobble position (U34) of certain tRNAs, forming tRNA-cmnm(5)s(2)U34. The sequence is that of tRNA modification GTPase MnmE from Campylobacter jejuni subsp. jejuni serotype O:23/36 (strain 81-176).